The sequence spans 446 residues: MRECLSIHIGQAGVQIGDACWELYCLEHGIQPDGFILDHQHDNLENPKVEHMNASLDTFFHETRAGKHVPRTLFMDLEPTVIDGIRVGRYHSLFHPEQLVNGKEDAANTYARGRYSVGSEVIELVLERIRKLAEQCSGLQGFLIYRSFGGGTGSGFTSLLMERLSVEYCKKIKLEFSVYPSPRISTAVVEPYNAILTTHSTIEYSDCAFMVDNEALYDICQHKLGIERPSYASINRLIAQVSSSITASLRFEGPLNVDLIEFQTNLVPYPRIHFPITALAPIISAEKAYQEQLSVSDVTASCFEVSNQLVKCDPRLGKYMACCLLYRGDVVPKDVNEAIAAMKSRTSVQFVDWCPTGFKVGINYQPPAVVPGGDLARVQRAVCMLSNTTAIVEAWARLDHKFDLMYAKKAFLHWYITEGMELGEFVEAREDLAALEKDYEEVGLSF.

Residues 1 to 4 (MREC) carry the MREC motif motif. Positions 11, 78, 147, 151, 152, 186, 213, and 235 each coordinate GTP. E78 is a Mg(2+) binding site. The active site involves E261.

It belongs to the tubulin family. As to quaternary structure, dimer of alpha and beta chains. A typical microtubule is a hollow water-filled tube with an outer diameter of 25 nm and an inner diameter of 15 nM. Alpha-beta heterodimers associate head-to-tail to form protofilaments running lengthwise along the microtubule wall with the beta-tubulin subunit facing the microtubule plus end conferring a structural polarity. Microtubules usually have 13 protofilaments but different protofilament numbers can be found in some organisms and specialized cells. Requires Mg(2+) as cofactor. Post-translationally, some glutamate residues at the C-terminus are polyglycylated, resulting in polyglycine chains on the gamma-carboxyl group. Glycylation is mainly limited to tubulin incorporated into axonemes (cilia and flagella) whereas glutamylation is prevalent in neuronal cells, centrioles, axonemes, and the mitotic spindle. Both modifications can coexist on the same protein on adjacent residues, and lowering polyglycylation levels increases polyglutamylation, and reciprocally. Cilia and flagella glycylation is required for their stability and maintenance. Flagella glycylation controls sperm motility. Some glutamate residues at the C-terminus are polyglutamylated, resulting in polyglutamate chains on the gamma-carboxyl group. Polyglutamylation plays a key role in microtubule severing by spastin (SPAST). SPAST preferentially recognizes and acts on microtubules decorated with short polyglutamate tails: severing activity by SPAST increases as the number of glutamates per tubulin rises from one to eight, but decreases beyond this glutamylation threshold. Glutamylation is also involved in cilia motility.

The protein localises to the cytoplasm. It is found in the cytoskeleton. The enzyme catalyses GTP + H2O = GDP + phosphate + H(+). Tubulin is the major constituent of microtubules, a cylinder consisting of laterally associated linear protofilaments composed of alpha- and beta-tubulin heterodimers. Microtubules grow by the addition of GTP-tubulin dimers to the microtubule end, where a stabilizing cap forms. Below the cap, tubulin dimers are in GDP-bound state, owing to GTPase activity of alpha-tubulin. The chain is Tubulin alpha chain-like 3 (Tubal3) from Mus musculus (Mouse).